The following is a 335-amino-acid chain: Probable geranylgeranyl transferase type-2 subunit beta (335 aa).

PFTB repeat units follow at residues 74–115 (TEEI…IIFN), 122–163 (ADTI…HLLG), 170–211 (IDSA…AIAG), 218–259 (RDRT…AILG), and 266–312 (SDAM…DDTL). Geranylgeranyl diphosphate is bound by residues 196 to 198 (HSG) and 238 to 250 (RPEK…YSWW). The Zn(2+) site is built by D244, C246, and H296.

This sequence belongs to the protein prenyltransferase subunit beta family. In terms of assembly, heterodimer of an alpha and a beta subunit. Zn(2+) is required as a cofactor.

The catalysed reaction is geranylgeranyl diphosphate + L-cysteinyl-[protein] = S-geranylgeranyl-L-cysteinyl-[protein] + diphosphate. Its function is as follows. Catalyzes the transfer of a geranyl-geranyl moiety from geranyl-geranyl pyrophosphate to both cysteines in Rab proteins with an -XXCC, -XCXC and -CCXX C-terminal. The chain is Probable geranylgeranyl transferase type-2 subunit beta (ggtb-1) from Caenorhabditis elegans.